The chain runs to 358 residues: Peptide chain release factor 1 (358 aa).

Q236 is modified (N5-methylglutamine).

It belongs to the prokaryotic/mitochondrial release factor family. Methylated by PrmC. Methylation increases the termination efficiency of RF1.

It localises to the cytoplasm. Functionally, peptide chain release factor 1 directs the termination of translation in response to the peptide chain termination codons UAG and UAA. The sequence is that of Peptide chain release factor 1 from Corynebacterium aurimucosum (strain ATCC 700975 / DSM 44827 / CIP 107346 / CN-1) (Corynebacterium nigricans).